We begin with the raw amino-acid sequence, 86 residues long: DNA replication protein 1 (86 aa).

Residues 38-67 adopt a coiled-coil conformation; it reads LELEKKMTKLEHENKLMKNALYELSRMENN.

It belongs to the phi29likevirus DNA replication protein 1 family. Homomultimer. Self-associates into large complexes forming long filamentous structures. Interacts (via N-terminus) with the primer terminal protein. Interacts with host FtsZ protein.

It is found in the host membrane. Functionally, protein that assembles into highly ordered structures and provides a specific site for viral DNA replication. Probably anchors the viral DNA replisome to the host membrane. This chain is DNA replication protein 1 (1), found in Bacillus subtilis (Bacteriophage phi-29).